The sequence spans 156 residues: MNINLTLIGQAIAFAIFVAFCMKFVWPPLINAISERQRKIADGLNAAEKAKADLADAQAQVKQELDAAKAQAAQLIEQANRRAAQLIEEARTQATAEGERIRQQSKETVDQEINAAREELRQQVAALAVDGAEKILNQQVDQQAHAAMLEQLAAKL.

Residues Leu5–Val25 traverse the membrane as a helical segment.

The protein belongs to the ATPase B chain family. As to quaternary structure, F-type ATPases have 2 components, F(1) - the catalytic core - and F(0) - the membrane proton channel. F(1) has five subunits: alpha(3), beta(3), gamma(1), delta(1), epsilon(1). F(0) has three main subunits: a(1), b(2) and c(10-14). The alpha and beta chains form an alternating ring which encloses part of the gamma chain. F(1) is attached to F(0) by a central stalk formed by the gamma and epsilon chains, while a peripheral stalk is formed by the delta and b chains.

It is found in the cell inner membrane. F(1)F(0) ATP synthase produces ATP from ADP in the presence of a proton or sodium gradient. F-type ATPases consist of two structural domains, F(1) containing the extramembraneous catalytic core and F(0) containing the membrane proton channel, linked together by a central stalk and a peripheral stalk. During catalysis, ATP synthesis in the catalytic domain of F(1) is coupled via a rotary mechanism of the central stalk subunits to proton translocation. Functionally, component of the F(0) channel, it forms part of the peripheral stalk, linking F(1) to F(0). This Acinetobacter baylyi (strain ATCC 33305 / BD413 / ADP1) protein is ATP synthase subunit b.